Consider the following 291-residue polypeptide: Tryptophan synthase alpha chain (291 aa).

Catalysis depends on proton acceptor residues Glu-69 and Asp-80.

It belongs to the TrpA family. As to quaternary structure, tetramer of two alpha and two beta chains.

The catalysed reaction is (1S,2R)-1-C-(indol-3-yl)glycerol 3-phosphate + L-serine = D-glyceraldehyde 3-phosphate + L-tryptophan + H2O. Its pathway is amino-acid biosynthesis; L-tryptophan biosynthesis; L-tryptophan from chorismate: step 5/5. Its function is as follows. The alpha subunit is responsible for the aldol cleavage of indoleglycerol phosphate to indole and glyceraldehyde 3-phosphate. This is Tryptophan synthase alpha chain from Bifidobacterium longum (strain NCC 2705).